We begin with the raw amino-acid sequence, 420 residues long: Dynein axonemal assembly factor 4 (420 aa).

The CS domain occupies 3-87; that stretch reads LQVSDYSWQQ…KEAAMWETLS (85 aa). The interval 7 to 103 is mediates interaction with ESR1 and STUB1; that stretch reads DYSWQQTKTA…ETMQRIREKS (97 aa). TPR repeat units lie at residues 290 to 323, 324 to 357, and 366 to 399; these read PEWLKDKGNKLFATENYLAAINAYNLAIRLNNKM, PLLYLNRAACHLKLKNLHKAIEDSSKALELLMPP, and MKAHVRRGTAFCQLELYVEGLQDYEAALKIDPSN.

Interacts with ZMYND10. Interacts with STUB1. Interacts with ESR1 and ESR2. Interacts with DNAAF2. Interacts with CCT3, CCT4, CCT5 and CCT8. Interacts with DNAAF6/PIH1D3.

The protein resides in the nucleus. It localises to the cytoplasm. It is found in the cell projection. The protein localises to the neuron projection. Its subcellular location is the dynein axonemal particle. Involved in neuronal migration during development of the cerebral neocortex. May regulate the stability and proteasomal degradation of the estrogen receptors that play an important role in neuronal differentiation, survival and plasticity. Axonemal dynein assembly factor required for ciliary motility. The chain is Dynein axonemal assembly factor 4 from Pongo pygmaeus (Bornean orangutan).